Consider the following 560-residue polypeptide: Thermosome subunit 1 (560 aa).

Residues 525–550 (LSGGQTGSDDDDGGAPGGMGGGMGGM) form a disordered region. Residues 538–550 (GAPGGMGGGMGGM) show a composition bias toward gly residues.

The protein belongs to the TCP-1 chaperonin family. As to quaternary structure, the thermosome or CCT complex is a oligomeric complex of two octameric double-ring structures; the complex is probably a heterooligomer of CCT1, CCT2 and CCT3 with yet unknown stoichiometry.

In terms of biological role, molecular chaperone that assists in the folding or refolding of nascent or denatured proteins along with ATP hydrolysis. ATPase activity is highest in thermosome assemblies containing CCT1:CCT2, followed by assemblies containing CCT1:CCT2:CCT3. Required for thermosome ATPase activity. Not required for growth. This Haloferax volcanii (strain ATCC 29605 / DSM 3757 / JCM 8879 / NBRC 14742 / NCIMB 2012 / VKM B-1768 / DS2) (Halobacterium volcanii) protein is Thermosome subunit 1 (cct1).